Consider the following 684-residue polypeptide: Threonine--tRNA ligase (684 aa).

The 66-residue stretch at 1-66 folds into the TGS domain; the sequence is MTVPATDSCP…DTDAEVVPVA (66 aa). Residues 261–567 are catalytic; the sequence is DHRKLGSELD…LTEHYAGAFP (307 aa). Zn(2+)-binding residues include C366, H417, and H544.

It belongs to the class-II aminoacyl-tRNA synthetase family. Homodimer. Zn(2+) serves as cofactor.

It localises to the cytoplasm. It carries out the reaction tRNA(Thr) + L-threonine + ATP = L-threonyl-tRNA(Thr) + AMP + diphosphate + H(+). In terms of biological role, catalyzes the attachment of threonine to tRNA(Thr) in a two-step reaction: L-threonine is first activated by ATP to form Thr-AMP and then transferred to the acceptor end of tRNA(Thr). Also edits incorrectly charged L-seryl-tRNA(Thr). In Mycolicibacterium paratuberculosis (strain ATCC BAA-968 / K-10) (Mycobacterium paratuberculosis), this protein is Threonine--tRNA ligase.